The following is a 514-amino-acid chain: Glutathione-binding protein GsiB (514 aa).

The signal sequence occupies residues 1–26 (MARAVHRSGLVALGIATALMASCAFA).

The protein belongs to the bacterial solute-binding protein 5 family. The complex is composed of two ATP-binding proteins (GsiA), two transmembrane proteins (GsiC and GsiD) and a solute-binding protein (GsiB).

The protein resides in the periplasm. Its function is as follows. Part of the ABC transporter complex GsiABCD involved in glutathione import. Binds glutathione. The protein is Glutathione-binding protein GsiB of Shigella flexneri serotype 5b (strain 8401).